A 474-amino-acid polypeptide reads, in one-letter code: Transmembrane transporter FVEG_12640 (474 aa).

Polar residues predominate over residues M1 to S15. The segment at M1–R39 is disordered. The next 10 helical transmembrane spans lie at I72 to V92, L133 to S153, G164 to I184, W192 to V212, W231 to I251, A275 to Y295, V317 to A337, L364 to L384, L387 to L407, and L431 to I451.

It belongs to the amino acid/polyamine transporter 2 family.

The protein resides in the membrane. In terms of biological role, transmembrane transporter; part of the Fusarium detoxification of benzoxazolinone cluster 2 (FDB2) involved in the degradation of benzoxazolinones produced by the host plant. Maize, wheat, and rye produce the 2 benzoxazinone phytoanticipins 2,4-dihy-droxy-7-methoxy-1,4-benzoxazin-3-one (DIMBOA) and 2,4-dihydroxy-1,4-benzoxazin-3-one (DIBOA) that, due to their inherent instability once released, spontaneously degrade to the more stable corresponding benzoxazolinones, 6-methoxy-2-benzoxazolinone (MBOA) and 2-benzoxazolinone (BOA), respectively. Might be involved in the transport of metabolites of benzoxazolinone degradation. The chain is Transmembrane transporter FVEG_12640 from Gibberella moniliformis (strain M3125 / FGSC 7600) (Maize ear and stalk rot fungus).